The chain runs to 419 residues: Serine hydroxymethyltransferase (419 aa).

(6S)-5,6,7,8-tetrahydrofolate-binding positions include Leu-121 and 125–127; that span reads GHL. Lys-229 bears the N6-(pyridoxal phosphate)lysine mark.

It belongs to the SHMT family. In terms of assembly, homodimer. Requires pyridoxal 5'-phosphate as cofactor.

The protein localises to the cytoplasm. The enzyme catalyses (6R)-5,10-methylene-5,6,7,8-tetrahydrofolate + glycine + H2O = (6S)-5,6,7,8-tetrahydrofolate + L-serine. It functions in the pathway one-carbon metabolism; tetrahydrofolate interconversion. Its pathway is amino-acid biosynthesis; glycine biosynthesis; glycine from L-serine: step 1/1. In terms of biological role, catalyzes the reversible interconversion of serine and glycine with tetrahydrofolate (THF) serving as the one-carbon carrier. This reaction serves as the major source of one-carbon groups required for the biosynthesis of purines, thymidylate, methionine, and other important biomolecules. Also exhibits THF-independent aldolase activity toward beta-hydroxyamino acids, producing glycine and aldehydes, via a retro-aldol mechanism. The chain is Serine hydroxymethyltransferase from Streptomyces griseus subsp. griseus (strain JCM 4626 / CBS 651.72 / NBRC 13350 / KCC S-0626 / ISP 5235).